Here is a 316-residue protein sequence, read N- to C-terminus: Olfactory receptor 5P79 (316 aa).

Topologically, residues Met1 to Val28 are extracellular. N-linked (GlcNAc...) asparagine glycosylation is present at Asn8. The chain crosses the membrane as a helical span at residues Val29–Ile49. Topologically, residues Leu50–Gln57 are cytoplasmic. Residues Leu58–Ser78 form a helical membrane-spanning segment. Topologically, residues Ser79–Ile102 are extracellular. Cys100 and Cys192 are oxidised to a cystine. A helical membrane pass occupies residues Gln103–Tyr123. Topologically, residues Asp124 to Ser136 are cytoplasmic. Residues Thr137–Leu157 form a helical membrane-spanning segment. The Extracellular portion of the chain corresponds to Asn158–Leu199. Residues Ile200–Ser220 form a helical membrane-spanning segment. The Cytoplasmic segment spans residues Tyr221–Ala240. A helical transmembrane segment spans residues Phe241–Ile261. Topologically, residues Tyr262–Asn274 are extracellular. Residues Lys275–Leu297 form a helical membrane-spanning segment. Residues Arg298–Ser316 are Cytoplasmic-facing.

It belongs to the G-protein coupled receptor 1 family.

It is found in the cell membrane. In terms of biological role, potential odorant receptor. The polypeptide is Olfactory receptor 5P79 (Mus musculus (Mouse)).